Reading from the N-terminus, the 430-residue chain is Serine--tRNA ligase (430 aa).

237–239 lines the L-serine pocket; sequence TAE. An ATP-binding site is contributed by 268–270; it reads RRE. Glutamate 291 lines the L-serine pocket. 355–358 contacts ATP; sequence EISS. L-serine is bound at residue serine 391.

It belongs to the class-II aminoacyl-tRNA synthetase family. Type-1 seryl-tRNA synthetase subfamily. As to quaternary structure, homodimer. The tRNA molecule binds across the dimer.

The protein localises to the cytoplasm. It carries out the reaction tRNA(Ser) + L-serine + ATP = L-seryl-tRNA(Ser) + AMP + diphosphate + H(+). It catalyses the reaction tRNA(Sec) + L-serine + ATP = L-seryl-tRNA(Sec) + AMP + diphosphate + H(+). It participates in aminoacyl-tRNA biosynthesis; selenocysteinyl-tRNA(Sec) biosynthesis; L-seryl-tRNA(Sec) from L-serine and tRNA(Sec): step 1/1. Functionally, catalyzes the attachment of serine to tRNA(Ser). Is also able to aminoacylate tRNA(Sec) with serine, to form the misacylated tRNA L-seryl-tRNA(Sec), which will be further converted into selenocysteinyl-tRNA(Sec). The sequence is that of Serine--tRNA ligase from Magnetococcus marinus (strain ATCC BAA-1437 / JCM 17883 / MC-1).